A 952-amino-acid polypeptide reads, in one-letter code: Glycine dehydrogenase (decarboxylating) (952 aa).

Position 696 is an N6-(pyridoxal phosphate)lysine (Lys-696).

It belongs to the GcvP family. The glycine cleavage system is composed of four proteins: P, T, L and H. Pyridoxal 5'-phosphate is required as a cofactor.

The catalysed reaction is N(6)-[(R)-lipoyl]-L-lysyl-[glycine-cleavage complex H protein] + glycine + H(+) = N(6)-[(R)-S(8)-aminomethyldihydrolipoyl]-L-lysyl-[glycine-cleavage complex H protein] + CO2. The glycine cleavage system catalyzes the degradation of glycine. The P protein binds the alpha-amino group of glycine through its pyridoxal phosphate cofactor; CO(2) is released and the remaining methylamine moiety is then transferred to the lipoamide cofactor of the H protein. This chain is Glycine dehydrogenase (decarboxylating), found in Pelagibacter ubique (strain HTCC1062).